A 493-amino-acid polypeptide reads, in one-letter code: MNHILAIDQGTTSSRAMVFDEALTLKSVAQEEFPQIYPRPGWVEHDPSDLWSSVAATARAAVERAEIDGSLAAIGITNQRETVVVWERASGHPIHNAIVWQDRRTADLCHALAEAGHEPLITGRTGLLLDPYFSATKLKWLLDHVEGARARARRGELLFGTVDSYLIWKLTGGRAHVTDATNAARTMLFDIGRGIWDPEICGLLDIPMEMLPEVKDCAAPFGMTRADLFGREIPILGVAGDQQAATCGQACFRPGMMKSTYGTGCFALLNTGEERVTSRARLLTTIAYQLGGKRTYALEGSIFIAGAVVQWLRDGLKIIREAGETQGLALSSDAAQDLVIVPAFTGLGAPWWKPESRGAVFGLTRNSGPAEFARAALESVGYQTRDLLEAMRADWAAGAEGVLRVDGGMAASDWSMQFLADIIGAPVDRPVVRETTALGVAWLAGMQAGLCPGPEEFAADWALERRFEPQMEASVREAKYDRWGRAVRAVMAV.

T11 is an ADP binding site. ATP-binding residues include T11, T12, and S13. T11 contributes to the sn-glycerol 3-phosphate binding site. R15 provides a ligand contact to ADP. Sn-glycerol 3-phosphate contacts are provided by R80, E81, Y132, and D241. Glycerol-binding residues include R80, E81, Y132, D241, and Q242. 2 residues coordinate ADP: T263 and G306. 4 residues coordinate ATP: T263, G306, Q310, and G408. Position 408 (G408) interacts with ADP.

It belongs to the FGGY kinase family.

The enzyme catalyses glycerol + ATP = sn-glycerol 3-phosphate + ADP + H(+). Its pathway is polyol metabolism; glycerol degradation via glycerol kinase pathway; sn-glycerol 3-phosphate from glycerol: step 1/1. With respect to regulation, inhibited by fructose 1,6-bisphosphate (FBP). Functionally, key enzyme in the regulation of glycerol uptake and metabolism. Catalyzes the phosphorylation of glycerol to yield sn-glycerol 3-phosphate. This Cereibacter sphaeroides (strain ATCC 17029 / ATH 2.4.9) (Rhodobacter sphaeroides) protein is Glycerol kinase.